The sequence spans 288 residues: Syntaxin-1B (288 aa).

Positions 1–13 (MKDRTQELRSAKD) are enriched in basic and acidic residues. Residues 1 to 20 (MKDRTQELRSAKDSDDEEEV) form a disordered region. At 1 to 264 (MKDRTQELRS…KYQSKARRKK (264 aa)) the chain is on the cytoplasmic side. A phosphoserine mark is found at serine 10 and serine 14. Residues 29-104 (MDEFFEQVEE…IEQSIEQEEG (76 aa)) adopt a coiled-coil conformation. A t-SNARE coiled-coil homology domain is found at 191–253 (LNEIETRHNE…ERAVSDTKKA (63 aa)). Residues 265–288 (IMIIICCVVLGVVLASSIGGTLGL) traverse the membrane as a helical; Anchor for type IV membrane protein segment.

It belongs to the syntaxin family. Interacts with OTOF. Interacts with SYT6 and SYT8; the interaction is Ca(2+)-dependent. In terms of processing, phosphorylated by CK2.

Its subcellular location is the membrane. It localises to the nucleus. The protein localises to the cytoplasm. The protein resides in the cytoskeleton. It is found in the microtubule organizing center. Its subcellular location is the centrosome. It localises to the spindle. Its function is as follows. Potentially involved in docking of synaptic vesicles at presynaptic active zones. May mediate Ca(2+)-regulation of exocytosis acrosomal reaction in sperm. The sequence is that of Syntaxin-1B (STX1B) from Homo sapiens (Human).